We begin with the raw amino-acid sequence, 812 residues long: Protein let-653 (812 aa).

An N-terminal signal peptide occupies residues 1–21 (MRHPLISLLLLIAFYSTSSEA). 2 consecutive Apple domains span residues 26–116 (CNSF…WKYC) and 123–209 (CSGE…ENNC). 6 cysteine pairs are disulfide-bonded: Cys-26-Cys-116, Cys-53-Cys-88, Cys-57-Cys-72, Cys-123-Cys-209, Cys-154-Cys-178, and Cys-158-Cys-166. 3 N-linked (GlcNAc...) asparagine glycosylation sites follow: Asn-172, Asn-211, and Asn-272. The ZP domain maps to 221–725 (ECRDNGISVS…NTCDDVEGCD (505 aa)). Composition is skewed to low complexity over residues 375-449 (QVTT…STTT) and 496-584 (PTTT…PASS). Disordered stretches follow at residues 375–461 (QVTT…STIM) and 494–584 (DVPT…PASS). An N-linked (GlcNAc...) asparagine glycan is attached at Asn-771.

In terms of processing, cleaved at the C-terminal domain. Expressed in external cuticle-producing epithelial cells including the epidermis, vulva, rectum, excretory duct and excretory pore.

It is found in the apical cell membrane. The protein localises to the secreted. Its subcellular location is the extracellular space. Its function is as follows. Required for epithelial tube development and shaping. Involved in the morphogenesis and function of the three unicellular tubes of the excretory system, the canal cell, the duct cell and the pore cell. Also plays a role in cuticle development, alae formation and shaping of the vulval lumen. Required for larval development. The chain is Protein let-653 from Caenorhabditis elegans.